The primary structure comprises 114 residues: Vesicle-associated membrane protein 2 (114 aa).

The segment covering 1–11 has biased composition (pro residues); that stretch reads MSAPAAGPPAA. The tract at residues 1–31 is disordered; that stretch reads MSAPAAGPPAAAPGDGAPQGPPNLTSNRRLQ. Ser2 bears the N-acetylserine mark. The Cytoplasmic portion of the chain corresponds to 2–92; it reads SAPAAGPPAA…KRKYWWKNMK (91 aa). Residues 29–89 form the v-SNARE coiled-coil homology domain; it reads RLQQTQAQVD…AKLKRKYWWK (61 aa). Residues 93 to 111 traverse the membrane as a helical; Anchor for type IV membrane protein segment; that stretch reads MMIIMGVICAIILIIIIVY. Over 112-114 the chain is Vesicular; sequence FST.

It belongs to the synaptobrevin family.

Its subcellular location is the cytoplasmic vesicle. It is found in the secretory vesicle. It localises to the synaptic vesicle membrane. The protein resides in the cell membrane. In terms of biological role, involved in the targeting and/or fusion of transport vesicles to their target membrane. Major SNARE protein of synaptic vesicles which mediates fusion of synaptic vesicles to release neurotransmitters. Essential for fast vesicular exocytosis and activity-dependent neurotransmitter release as well as fast endocytosis that mediates rapid reuse of synaptic vesicles. This chain is Vesicle-associated membrane protein 2 (vamp2), found in Xenopus laevis (African clawed frog).